The chain runs to 185 residues: Peptidyl-tRNA hydrolase (185 aa).

Tyrosine 14 contributes to the tRNA binding site. Residue histidine 19 is the Proton acceptor of the active site. TRNA-binding residues include tyrosine 65, asparagine 67, and asparagine 113.

It belongs to the PTH family. Monomer.

The protein localises to the cytoplasm. The enzyme catalyses an N-acyl-L-alpha-aminoacyl-tRNA + H2O = an N-acyl-L-amino acid + a tRNA + H(+). Hydrolyzes ribosome-free peptidyl-tRNAs (with 1 or more amino acids incorporated), which drop off the ribosome during protein synthesis, or as a result of ribosome stalling. Its function is as follows. Catalyzes the release of premature peptidyl moieties from peptidyl-tRNA molecules trapped in stalled 50S ribosomal subunits, and thus maintains levels of free tRNAs and 50S ribosomes. In Rickettsia bellii (strain RML369-C), this protein is Peptidyl-tRNA hydrolase.